We begin with the raw amino-acid sequence, 45 residues long: Large ribosomal subunit protein bL34 (45 aa).

The protein belongs to the bacterial ribosomal protein bL34 family.

The sequence is that of Large ribosomal subunit protein bL34 from Acidothermus cellulolyticus (strain ATCC 43068 / DSM 8971 / 11B).